The following is an 862-amino-acid chain: Eukaryotic translation initiation factor 3 subunit C (862 aa).

Residues 1 to 81 are disordered; it reads MSSRFFYGGG…EEEEKVTVVK (81 aa). Over residues 17 to 54 the composition is skewed to acidic residues; it reads SSDEEELYSDREEEEKSEEEESSEEEDETSEEEESDEE. Positions 55-65 are enriched in basic and acidic residues; sequence TGARKFLKDVA. A compositionally biased stretch (acidic residues) spans 66-75; the sequence is SDSEEEEEEE. A PCI domain is found at 600-774; that stretch reads FHMHINLELL…NAIVFRKGVE (175 aa). Positions 813–862 are disordered; it reads RDQGAGARGGRGSGRGGQARGGPRFPGGQQGRRPGGQQFGGGALGGAIKA. Positions 818-862 are enriched in gly residues; that stretch reads GARGGRGSGRGGQARGGPRFPGGQQGRRPGGQQFGGGALGGAIKA.

The protein belongs to the eIF-3 subunit C family. In terms of assembly, component of the eukaryotic translation initiation factor 3 (eIF-3) complex.

The protein localises to the cytoplasm. Its function is as follows. Component of the eukaryotic translation initiation factor 3 (eIF-3) complex, which is involved in protein synthesis of a specialized repertoire of mRNAs and, together with other initiation factors, stimulates binding of mRNA and methionyl-tRNAi to the 40S ribosome. The eIF-3 complex specifically targets and initiates translation of a subset of mRNAs involved in cell proliferation. The polypeptide is Eukaryotic translation initiation factor 3 subunit C (nip1) (Aspergillus fumigatus (strain CBS 144.89 / FGSC A1163 / CEA10) (Neosartorya fumigata)).